The sequence spans 197 residues: Imidazoleglycerol-phosphate dehydratase (197 aa).

Belongs to the imidazoleglycerol-phosphate dehydratase family.

The protein localises to the cytoplasm. It catalyses the reaction D-erythro-1-(imidazol-4-yl)glycerol 3-phosphate = 3-(imidazol-4-yl)-2-oxopropyl phosphate + H2O. The protein operates within amino-acid biosynthesis; L-histidine biosynthesis; L-histidine from 5-phospho-alpha-D-ribose 1-diphosphate: step 6/9. This is Imidazoleglycerol-phosphate dehydratase from Thermobifida fusca (strain YX).